The sequence spans 342 residues: Anthranilate phosphoribosyltransferase (342 aa).

Residues Gly81, 84–85, 91–94, 109–117, and Ser121 contribute to the 5-phospho-alpha-D-ribose 1-diphosphate site; these read GD, NVSS, and KHGNRGVSS. Residue Gly81 participates in anthranilate binding. Ser93 contributes to the Mg(2+) binding site. Asn112 is a binding site for anthranilate. Arg167 contributes to the anthranilate binding site. Residues Asp226 and Glu227 each coordinate Mg(2+).

This sequence belongs to the anthranilate phosphoribosyltransferase family. As to quaternary structure, homodimer. Requires Mg(2+) as cofactor.

It catalyses the reaction N-(5-phospho-beta-D-ribosyl)anthranilate + diphosphate = 5-phospho-alpha-D-ribose 1-diphosphate + anthranilate. It participates in amino-acid biosynthesis; L-tryptophan biosynthesis; L-tryptophan from chorismate: step 2/5. In terms of biological role, catalyzes the transfer of the phosphoribosyl group of 5-phosphorylribose-1-pyrophosphate (PRPP) to anthranilate to yield N-(5'-phosphoribosyl)-anthranilate (PRA). In Marinobacter nauticus (strain ATCC 700491 / DSM 11845 / VT8) (Marinobacter aquaeolei), this protein is Anthranilate phosphoribosyltransferase.